Here is a 261-residue protein sequence, read N- to C-terminus: Acetylglutamate kinase (261 aa).

Substrate is bound by residues 45-46 (GG), arginine 67, and asparagine 162.

This sequence belongs to the acetylglutamate kinase family. ArgB subfamily.

Its subcellular location is the cytoplasm. It carries out the reaction N-acetyl-L-glutamate + ATP = N-acetyl-L-glutamyl 5-phosphate + ADP. It functions in the pathway amino-acid biosynthesis; L-arginine biosynthesis; N(2)-acetyl-L-ornithine from L-glutamate: step 2/4. Functionally, catalyzes the ATP-dependent phosphorylation of N-acetyl-L-glutamate. In Bacteroides fragilis (strain ATCC 25285 / DSM 2151 / CCUG 4856 / JCM 11019 / LMG 10263 / NCTC 9343 / Onslow / VPI 2553 / EN-2), this protein is Acetylglutamate kinase.